Reading from the N-terminus, the 146-residue chain is Myoglobin (146 aa).

Residues 2–141 (GDFDMVLKFW…IIADIDATYK (140 aa)) enclose the Globin domain. H60 is a nitrite binding site. H60 is an O2 binding site. H89 contributes to the heme b binding site.

The protein belongs to the globin family. In terms of assembly, monomeric.

Its subcellular location is the cytoplasm. It localises to the sarcoplasm. It catalyses the reaction Fe(III)-heme b-[protein] + nitric oxide + H2O = Fe(II)-heme b-[protein] + nitrite + 2 H(+). The catalysed reaction is H2O2 + AH2 = A + 2 H2O. Monomeric heme protein which primary function is to store oxygen and facilitate its diffusion within muscle tissues. Reversibly binds oxygen through a pentacoordinated heme iron and enables its timely and efficient release as needed during periods of heightened demand. Depending on the oxidative conditions of tissues and cells, and in addition to its ability to bind oxygen, it also has a nitrite reductase activity whereby it regulates the production of bioactive nitric oxide. Under stress conditions, like hypoxia and anoxia, it also protects cells against reactive oxygen species thanks to its pseudoperoxidase activity. This is Myoglobin (mb) from Tetraodon nigroviridis (Spotted green pufferfish).